Here is a 452-residue protein sequence, read N- to C-terminus: Methionine aminopeptidase 2 (452 aa).

Residues 1–96 form a disordered region; that stretch reads MAVQALPEIN…VPLSTLFPNN (96 aa). The span at 18 to 35 shows a compositional bias: low complexity; that stretch reads GAANAAAKGQAAQGTAGN. Residues 36-53 are compositionally biased toward acidic residues; the sequence is DDAENDESDEDKEDEQEV. Residues 62-77 are compositionally biased toward basic residues; it reads GKKKKKKTKKKKKKGT. His202 serves as a coordination point for substrate. Residues Asp222, Asp233, and His302 each coordinate a divalent metal cation. His310 provides a ligand contact to substrate. Positions 338 and 433 each coordinate a divalent metal cation.

Belongs to the peptidase M24A family. Methionine aminopeptidase eukaryotic type 2 subfamily. It depends on Co(2+) as a cofactor. Zn(2+) is required as a cofactor. Requires Mn(2+) as cofactor. Fe(2+) serves as cofactor.

The protein resides in the cytoplasm. The catalysed reaction is Release of N-terminal amino acids, preferentially methionine, from peptides and arylamides.. Functionally, cotranslationally removes the N-terminal methionine from nascent proteins. The N-terminal methionine is often cleaved when the second residue in the primary sequence is small and uncharged (Met-Ala-, Cys, Gly, Pro, Ser, Thr, or Val). This is Methionine aminopeptidase 2 from Coccidioides posadasii (strain C735) (Valley fever fungus).